A 232-amino-acid chain; its full sequence is Rhamnogalacturonan acetylesterase RhgT (232 aa).

The active-site Nucleophile is Ser-14. Residues Glu-191 and His-195 contribute to the active site.

It belongs to the 'GDSL' lipolytic enzyme family. Monomer.

With respect to regulation, almost completely inhibited by diethylpyrocarbonate at 5 mM and completely inhibited by phenylmethylsulfonyl fluoride (PMSF) at 50 mM. Dimethyl phosphite achieves only a 53% inhibition. Also inhibited by metal ions (magnesium, manganese and calcium) and chelating agent (EDTA) at the same level. May play a role in the degradation of type I rhamnogalacturonan derived from plant cell walls. This enzyme has a broad substrate specificity, and shows strong preference for glucose pentaacetate, beta-naphthylacetate, and p-nitrophenyl acetate (pNPA). Also active toward acetylated xylan. This Bacillus subtilis (strain 168) protein is Rhamnogalacturonan acetylesterase RhgT (rhgT).